The primary structure comprises 224 residues: UPF0758 protein XF_0148 (224 aa).

Residues 102–224 (SIHDPISAGR…PVSFAEHGWL (123 aa)) enclose the MPN domain. Residues His173, His175, and Asp186 each contribute to the Zn(2+) site. A JAMM motif motif is present at residues 173–186 (HNHPSGNREPSPAD).

This sequence belongs to the UPF0758 family.

The chain is UPF0758 protein XF_0148 from Xylella fastidiosa (strain 9a5c).